We begin with the raw amino-acid sequence, 463 residues long: Asparagine--tRNA ligase (463 aa).

This sequence belongs to the class-II aminoacyl-tRNA synthetase family. Homodimer.

It localises to the cytoplasm. The catalysed reaction is tRNA(Asn) + L-asparagine + ATP = L-asparaginyl-tRNA(Asn) + AMP + diphosphate + H(+). The protein is Asparagine--tRNA ligase of Bacillus cytotoxicus (strain DSM 22905 / CIP 110041 / 391-98 / NVH 391-98).